We begin with the raw amino-acid sequence, 504 residues long: Cobyric acid synthase (504 aa).

The 189-residue stretch at 254-442 folds into the GATase cobBQ-type domain; that stretch reads AIDVAVIRYP…MHDLFHNDMF (189 aa). Catalysis depends on C336, which acts as the Nucleophile. H434 is an active-site residue.

It belongs to the CobB/CobQ family. CobQ subfamily.

It participates in cofactor biosynthesis; adenosylcobalamin biosynthesis. Functionally, catalyzes amidations at positions B, D, E, and G on adenosylcobyrinic A,C-diamide. NH(2) groups are provided by glutamine, and one molecule of ATP is hydrogenolyzed for each amidation. This is Cobyric acid synthase from Anoxybacillus flavithermus (strain DSM 21510 / WK1).